The chain runs to 254 residues: 5-oxoprolinase subunit A (254 aa).

The protein belongs to the LamB/PxpA family. As to quaternary structure, forms a complex composed of PxpA, PxpB and PxpC.

It carries out the reaction 5-oxo-L-proline + ATP + 2 H2O = L-glutamate + ADP + phosphate + H(+). Catalyzes the cleavage of 5-oxoproline to form L-glutamate coupled to the hydrolysis of ATP to ADP and inorganic phosphate. The chain is 5-oxoprolinase subunit A from Burkholderia mallei (strain NCTC 10247).